The chain runs to 270 residues: Orotidine 5'-phosphate decarboxylase (270 aa).

Residues D39, 61 to 63 (KTH), 93 to 102 (DRKFADIGNT), Y221, and R239 contribute to the substrate site. K95 (proton donor) is an active-site residue.

This sequence belongs to the OMP decarboxylase family.

It catalyses the reaction orotidine 5'-phosphate + H(+) = UMP + CO2. The protein operates within pyrimidine metabolism; UMP biosynthesis via de novo pathway; UMP from orotate: step 2/2. In Candida dubliniensis (strain CD36 / ATCC MYA-646 / CBS 7987 / NCPF 3949 / NRRL Y-17841) (Yeast), this protein is Orotidine 5'-phosphate decarboxylase (URA3).